The primary structure comprises 242 residues: Synaptonemal complex central element protein 1-like (242 aa).

Residues 1–24 (MAGKLKPLNVEAPEATEEAEGQAK) form a disordered region. The stretch at 44–181 (LEPQIEDLIS…LREVERRLHS (138 aa)) forms a coiled coil. Positions 206–242 (VRSAPEVGAGEGEAGPELPRARDEEDPEPPVAAPDAL) are disordered.

This sequence belongs to the SYCE family.

In terms of biological role, may be involved in meiosis. The chain is Synaptonemal complex central element protein 1-like (SYCE1L) from Homo sapiens (Human).